Reading from the N-terminus, the 647-residue chain is Probable cobalt/nickel-exporting P-type ATPase (647 aa).

A run of 5 helical transmembrane segments spans residues 33 to 53 (WAAAALALFLTGLAAQLLGAP), 55 to 75 (AVVWTLYLACYVVGGWEPAWV), 94 to 114 (AAIGAATIGQVFDGALLIVIF), 260 to 280 (AGVVVATLALLTVPLMFGADL), and 291 to 311 (MIVASPCAVVLATMPPLLSAI). D339 serves as the catalytic 4-aspartylphosphate intermediate. 2 residues coordinate Mg(2+): D532 and D536. Residues 587 to 607 (VIANLVMAGAAITTLVLWDLF) traverse the membrane as a helical segment.

This sequence belongs to the cation transport ATPase (P-type) (TC 3.A.3) family. Type IB subfamily.

The protein resides in the cell membrane. It catalyses the reaction Ni(2+)(out) + ATP + H2O = Ni(2+)(in) + ADP + phosphate + H(+). The enzyme catalyses Co(2+)(out) + ATP + H2O = Co(2+)(in) + ADP + phosphate + H(+). Its function is as follows. Involved in heavy metal homeostasis. Probably exports nickel and cobalt ions out of the cell. This chain is Probable cobalt/nickel-exporting P-type ATPase (ctpD), found in Mycolicibacterium smegmatis (strain ATCC 700084 / mc(2)155) (Mycobacterium smegmatis).